The following is a 262-amino-acid chain: Expansin-A21 (262 aa).

Residues 1-29 (MKLLEKMTYVECFMIIMATWFMFISYSHG) form the signal peptide. Positions 64-169 (EGACGYGDLN…RRVPCAKTGG (106 aa)) constitute an Expansin-like EG45 domain. Positions 179-258 (NILTILPYNV…SWGFGQTFDG (80 aa)) constitute an Expansin-like CBD domain.

The protein belongs to the expansin family. Expansin A subfamily.

It is found in the secreted. The protein resides in the cell wall. The protein localises to the membrane. Its function is as follows. Causes loosening and extension of plant cell walls by disrupting non-covalent bonding between cellulose microfibrils and matrix glucans. No enzymatic activity has been found. In Arabidopsis thaliana (Mouse-ear cress), this protein is Expansin-A21 (EXPA21).